A 141-amino-acid polypeptide reads, in one-letter code: Nucleoside triphosphatase NudI (141 aa).

The Nudix hydrolase domain occupies methionine 1 to leucine 141. The Nudix box signature appears at glycine 38–glycine 59.

It belongs to the Nudix hydrolase family. NudI subfamily. Monomer. It depends on Mg(2+) as a cofactor.

It catalyses the reaction a ribonucleoside 5'-triphosphate + H2O = a ribonucleoside 5'-phosphate + diphosphate + H(+). The catalysed reaction is a 2'-deoxyribonucleoside 5'-triphosphate + H2O = a 2'-deoxyribonucleoside 5'-phosphate + diphosphate + H(+). The enzyme catalyses dUTP + H2O = dUMP + diphosphate + H(+). It carries out the reaction dTTP + H2O = dTMP + diphosphate + H(+). It catalyses the reaction dCTP + H2O = dCMP + diphosphate + H(+). Its function is as follows. Catalyzes the hydrolysis of nucleoside triphosphates, with a preference for pyrimidine deoxynucleoside triphosphates (dUTP, dTTP and dCTP). The sequence is that of Nucleoside triphosphatase NudI from Salmonella arizonae (strain ATCC BAA-731 / CDC346-86 / RSK2980).